Here is a 382-residue protein sequence, read N- to C-terminus: Mannitol-1-phosphate 5-dehydrogenase (382 aa).

4–15 lines the NAD(+) pocket; that stretch reads AVHFGAGNIGRG.

This sequence belongs to the mannitol dehydrogenase family.

The catalysed reaction is D-mannitol 1-phosphate + NAD(+) = beta-D-fructose 6-phosphate + NADH + H(+). This is Mannitol-1-phosphate 5-dehydrogenase from Vibrio parahaemolyticus serotype O3:K6 (strain RIMD 2210633).